Consider the following 331-residue polypeptide: tRNA-cytidine(32) 2-sulfurtransferase (331 aa).

Positions 1-31 (MNAPHMNDTTADAATLDATAAPAGRPALTRR) are disordered. A compositionally biased stretch (low complexity) spans 8–23 (DTTADAATLDATAAPA). The PP-loop motif signature appears at 71–76 (SGGKDS). Positions 146, 149, and 237 each coordinate [4Fe-4S] cluster.

This sequence belongs to the TtcA family. Homodimer. Requires Mg(2+) as cofactor. [4Fe-4S] cluster is required as a cofactor.

The protein localises to the cytoplasm. It carries out the reaction cytidine(32) in tRNA + S-sulfanyl-L-cysteinyl-[cysteine desulfurase] + AH2 + ATP = 2-thiocytidine(32) in tRNA + L-cysteinyl-[cysteine desulfurase] + A + AMP + diphosphate + H(+). It functions in the pathway tRNA modification. In terms of biological role, catalyzes the ATP-dependent 2-thiolation of cytidine in position 32 of tRNA, to form 2-thiocytidine (s(2)C32). The sulfur atoms are provided by the cysteine/cysteine desulfurase (IscS) system. In Burkholderia lata (strain ATCC 17760 / DSM 23089 / LMG 22485 / NCIMB 9086 / R18194 / 383), this protein is tRNA-cytidine(32) 2-sulfurtransferase.